A 232-amino-acid polypeptide reads, in one-letter code: Transcriptional regulatory protein CpxR (232 aa).

The region spanning K3–L115 is the Response regulatory domain. At D51 the chain carries 4-aspartylphosphate. A DNA-binding region (ompR/PhoB-type) is located at residues S131 to S230.

As to quaternary structure, interacts with cognate sensor kinase CpxA. In terms of processing, phosphorylated by CpxA.

Its subcellular location is the cytoplasm. Its activity is regulated as follows. The two-component system is activated by envelope stress such as overexpression of some (misfolded) periplasmic proteins. Functionally, response regulator member of the two-component regulatory system CpxA/CpxR which responds to envelope stress response by activating or, in some cases, repressing expression of downstream genes. Binds to the promoter regions of various genes in vitro, including ompC, cpxP, ryhB and mrkA and, when CpxR is phosphorylated, pecO. Represses expression of the major pilin of type 3 fimbriae MrkA as well as that of type 1 fimbriae FimA. Repression of expression of MrkA appears to be indirect, mediated by activation of the iron homeostasis regulator RyhB. This is Transcriptional regulatory protein CpxR from Klebsiella pneumoniae subsp. pneumoniae (strain HS11286).